Reading from the N-terminus, the 363-residue chain is 3-dehydroquinate synthase (363 aa).

Residues 75–80 (DAEEGK), 109–113 (GAVTD), 133–134 (TS), lysine 146, lysine 155, and 173–176 (TLQT) contribute to the NAD(+) site. Glutamate 188, histidine 251, and histidine 267 together coordinate Zn(2+).

The protein belongs to the sugar phosphate cyclases superfamily. Dehydroquinate synthase family. Co(2+) serves as cofactor. Requires Zn(2+) as cofactor. The cofactor is NAD(+).

Its subcellular location is the cytoplasm. The enzyme catalyses 7-phospho-2-dehydro-3-deoxy-D-arabino-heptonate = 3-dehydroquinate + phosphate. It participates in metabolic intermediate biosynthesis; chorismate biosynthesis; chorismate from D-erythrose 4-phosphate and phosphoenolpyruvate: step 2/7. Functionally, catalyzes the conversion of 3-deoxy-D-arabino-heptulosonate 7-phosphate (DAHP) to dehydroquinate (DHQ). This Paenarthrobacter aurescens (strain TC1) protein is 3-dehydroquinate synthase.